The chain runs to 201 residues: Flagellin B1 (201 aa).

Residues 1–11 (MFEQNDDRDRG) constitute a propeptide that is removed on maturation.

The protein belongs to the archaeal flagellin family.

It is found in the archaeal flagellum. Its function is as follows. Flagellin is the subunit protein which polymerizes to form the filaments of archaeal flagella. The sequence is that of Flagellin B1 (flaB1) from Natrialba magadii (strain ATCC 43099 / DSM 3394 / CCM 3739 / CIP 104546 / IAM 13178 / JCM 8861 / NBRC 102185 / NCIMB 2190 / MS3) (Natronobacterium magadii).